Here is a 726-residue protein sequence, read N- to C-terminus: Myb-like protein Z (726 aa).

4 disordered regions span residues 15–109 (DSND…SLSN), 124–149 (ASPS…YHPY), 161–239 (HYVS…TKQQ), and 272–303 (LIPS…NMRS). A compositionally biased stretch (low complexity) spans 18-39 (DNNNNNNNNNNSNNNNNNNNNN). A compositionally biased stretch (polar residues) spans 45-80 (SSATSSPTGQDSTIDRPNSPSSSIKFTYPSKNSIVT). Residues 81-108 (SPSSLQLPSPSFSSSSSSSSSSSSSSLS) are compositionally biased toward low complexity. Residues 124-147 (ASPSKSSENSPTIHTSSLSPNSYH) are compositionally biased toward polar residues. The segment covering 165-177 (NNNNNNNNNNNNN) has biased composition (low complexity). Positions 183–209 (SSELYNTSPSISSKTTPNGSSTNNSPF) are enriched in polar residues. Positions 221–239 (NNNNNNNNDRNENNTTKQQ) are enriched in low complexity. The Myb-like domain occupies 329 to 388 (IPIATRKLWSQEECCRLLEMVFQRDPQSVTSKESELRWRSIASTLGRTVTSTRKKYMRLM). Low complexity predominate over residues 516 to 651 (KQIQQQQKQK…NNNYRSSLSP (136 aa)). The segment at 516–726 (KQIQQQQKQK…NNNNYNNYHN (211 aa)) is disordered. The span at 661-675 (QSPQQKSNNENQQNF) shows a compositional bias: polar residues. Positions 709–726 (NLNNNNNNNNNNYNNYHN) are enriched in low complexity.

This is Myb-like protein Z (mybZ) from Dictyostelium discoideum (Social amoeba).